Consider the following 546-residue polypeptide: Glucose-6-phosphate isomerase (546 aa).

Glu357 functions as the Proton donor in the catalytic mechanism. Catalysis depends on residues His389 and Lys509.

It belongs to the GPI family.

Its subcellular location is the cytoplasm. It carries out the reaction alpha-D-glucose 6-phosphate = beta-D-fructose 6-phosphate. The protein operates within carbohydrate biosynthesis; gluconeogenesis. It participates in carbohydrate degradation; glycolysis; D-glyceraldehyde 3-phosphate and glycerone phosphate from D-glucose: step 2/4. Catalyzes the reversible isomerization of glucose-6-phosphate to fructose-6-phosphate. The polypeptide is Glucose-6-phosphate isomerase (Anaeromyxobacter dehalogenans (strain 2CP-1 / ATCC BAA-258)).